Consider the following 556-residue polypeptide: MKPSRGLSLTDLVNHDDAPPLNNGDNNVKQEEVQAENLATNPASVLAPGPVIVDTLPPVEAPVSTSDTGNTSHTGAAPQTAVTAESDETDTDDEPGEIVFENTKFRFDDEEQQPQKDKLVKGTSSEKKDKQVNAATKEIQLDSKPVKEQSPKTKDEGDIPVEDADKADNKVETQKKENGIKQEVEPVEQDGKKSVEPAKQSKEDSKKEKDIFQQKTSNASVKNNIKKDLKILSELSSSSLPKRYNVPPIWARKWKPTVKALQAIDSSNLKLDDSILGFIPEDDLTKSVQDWIYATLIAVEPELRQFIEVEMKYGLIIDPSTSNRVNPPVSSQCVFTDLDSTMKPDVDERVFDEFNRYIKNLSELNENMGKFNIIDSHASDLSYRVRTHTERPKFLRMTRDVNTGRIAQFIEKRKISQILLYSPKDSYDTKISISLELPVPENDPPEKYKNHTPTGHRLKKRTSYIHNDSCTRFDITRVENKPIRVNNKNEKEPESDTTYEVELEINTPALLNAFDNIQHDSKEYAAIVRTFLNNGTIVRRKLSSLSYDIYKGSNKL.

Disordered stretches follow at residues methionine 1 to valine 28 and leucine 56 to serine 217. Over residues valine 63 to threonine 74 the composition is skewed to polar residues. Over residues glutamate 85 to glycine 96 the composition is skewed to acidic residues. Basic and acidic residues-rich tracts occupy residues threonine 103 to glutamine 131 and isoleucine 139 to phenylalanine 212.

This sequence belongs to the fungal TPase family. Heterodimer. The mRNA-capping enzyme is composed of two separate chains alpha and beta, respectively a mRNA guanylyltransferase and an mRNA 5'-triphosphate monophosphatase. Requires Mg(2+) as cofactor.

It is found in the nucleus. It carries out the reaction a 5'-end triphospho-ribonucleoside in mRNA + H2O = a 5'-end diphospho-ribonucleoside in mRNA + phosphate + H(+). Its function is as follows. First step of mRNA capping. Converts the 5'-triphosphate end of a nascent mRNA chain into a diphosphate end. In Kluyveromyces lactis (strain ATCC 8585 / CBS 2359 / DSM 70799 / NBRC 1267 / NRRL Y-1140 / WM37) (Yeast), this protein is mRNA-capping enzyme subunit beta (CET1).